Reading from the N-terminus, the 489-residue chain is Cysteine--tRNA ligase (489 aa).

C27 is a binding site for Zn(2+). The 'HIGH' region signature appears at 29 to 39 (VTVYDLCHLGH). 3 residues coordinate Zn(2+): C211, H236, and E240. The 'KMSKS' region motif lies at 268–272 (KMSKS). Residue K271 coordinates ATP.

This sequence belongs to the class-I aminoacyl-tRNA synthetase family. In terms of assembly, monomer. Requires Zn(2+) as cofactor.

The protein localises to the cytoplasm. The catalysed reaction is tRNA(Cys) + L-cysteine + ATP = L-cysteinyl-tRNA(Cys) + AMP + diphosphate. This Prochlorococcus marinus (strain MIT 9215) protein is Cysteine--tRNA ligase.